The chain runs to 109 residues: RYamide neuropeptides (109 aa).

An N-terminal signal peptide occupies residues 1–22 (MNECVNKLLHLKFLFYFILGIQ). Tyr33 bears the Tyrosine amide mark. The propeptide occupies 36 to 53 (STTYDESLKSRRIFIVPR). Tyr63 carries the tyrosine amide modification. A propeptide spanning residues 67 to 109 (SGKYLCLSREINKLIVRKRLRNNDKERTPTLSFITKHFLMRNT) is cleaved from the precursor.

Its subcellular location is the secreted. In terms of biological role, neuropeptides RYamide-1 and RYamide-2 are ligands for the G-protein coupled receptor RYa-R. May suppress feeding behavior. This Drosophila melanogaster (Fruit fly) protein is RYamide neuropeptides.